We begin with the raw amino-acid sequence, 508 residues long: ATP synthase subunit alpha (508 aa).

Glycine 169–threonine 176 is a binding site for ATP.

It belongs to the ATPase alpha/beta chains family. In terms of assembly, F-type ATPases have 2 components, CF(1) - the catalytic core - and CF(0) - the membrane proton channel. CF(1) has five subunits: alpha(3), beta(3), gamma(1), delta(1), epsilon(1). CF(0) has three main subunits: a(1), b(2) and c(9-12). The alpha and beta chains form an alternating ring which encloses part of the gamma chain. CF(1) is attached to CF(0) by a central stalk formed by the gamma and epsilon chains, while a peripheral stalk is formed by the delta and b chains.

It localises to the cell inner membrane. The catalysed reaction is ATP + H2O + 4 H(+)(in) = ADP + phosphate + 5 H(+)(out). Functionally, produces ATP from ADP in the presence of a proton gradient across the membrane. The alpha chain is a regulatory subunit. The polypeptide is ATP synthase subunit alpha (Allorhizobium ampelinum (strain ATCC BAA-846 / DSM 112012 / S4) (Agrobacterium vitis (strain S4))).